Reading from the N-terminus, the 24-residue chain is EDDHHHHHHHHHGVGGGGGGGGGG.

Residues 1–13 (EDDHHHHHHHHHG) are compositionally biased toward basic residues. Positions 1–24 (EDDHHHHHHHHHGVGGGGGGGGGG) are disordered. The segment covering 14–24 (VGGGGGGGGGG) has biased composition (gly residues).

In terms of tissue distribution, expressed by the venom gland.

The protein resides in the secreted. In terms of biological role, may serve as a metalloproteinase inhibitor during glandular storage. Their inhibition may be instantly disengaged, by dilution or physiochemical change, when venom is injected into tissue of the victim. This Atheris chlorechis (Western bush viper) protein is Poly-His-poly-Gly peptide 1.